Here is a 59-residue protein sequence, read N- to C-terminus: UPF0434 protein Shew185_1670 (59 aa).

The protein belongs to the UPF0434 family.

This is UPF0434 protein Shew185_1670 from Shewanella baltica (strain OS185).